A 320-amino-acid chain; its full sequence is 33 kDa chaperonin (320 aa).

Basic and acidic residues predominate over residues 1 to 17; that stretch reads MTDASGSERLKRTKDIS. The disordered stretch occupies residues 1-27; the sequence is MTDASGSERLKRTKDISESTPPSSLPD. 2 disulfides stabilise this stretch: Cys-262/Cys-264 and Cys-295/Cys-298.

Belongs to the HSP33 family. In terms of processing, under oxidizing conditions two disulfide bonds are formed involving the reactive cysteines. Under reducing conditions zinc is bound to the reactive cysteines and the protein is inactive.

The protein localises to the cytoplasm. Redox regulated molecular chaperone. Protects both thermally unfolding and oxidatively damaged proteins from irreversible aggregation. Plays an important role in the bacterial defense system toward oxidative stress. This is 33 kDa chaperonin from Synechococcus sp. (strain JA-3-3Ab) (Cyanobacteria bacterium Yellowstone A-Prime).